The primary structure comprises 319 residues: Dehydrogenase/reductase SDR family member 9 (319 aa).

Positions 1 to 20 are cleaved as a signal peptide; that stretch reads MLLWVLALLFLCAFLWNYKG. Residues 34-58 and D83 each bind NAD(+); that span reads ITGCDSGFGNLAARTFDRKGFRVIA. S164 is a substrate binding site. The Proton acceptor role is filled by Y176. K180 is a binding site for NAD(+).

It belongs to the short-chain dehydrogenases/reductases (SDR) family. Homotetramer. In terms of tissue distribution, highly expressed in epithelium of estrus uterus.

It localises to the microsome membrane. It is found in the endoplasmic reticulum membrane. The enzyme catalyses 3beta-hydroxy-5alpha-pregnane-20-one + NAD(+) = 5alpha-pregnane-3,20-dione + NADH + H(+). It carries out the reaction 17beta-hydroxy-5alpha-androstan-3-one + NAD(+) = 5alpha-androstan-3,17-dione + NADH + H(+). It catalyses the reaction androsterone + NAD(+) = 5alpha-androstan-3,17-dione + NADH + H(+). The catalysed reaction is 5alpha-androstane-3alpha,17beta-diol + NAD(+) = 17beta-hydroxy-5alpha-androstan-3-one + NADH + H(+). The enzyme catalyses all-trans-retinol + NAD(+) = all-trans-retinal + NADH + H(+). It carries out the reaction 3alpha-hydroxy-5alpha-pregnan-20-one + NAD(+) = 5alpha-pregnane-3,20-dione + NADH + H(+). 3-alpha-hydroxysteroid dehydrogenase that converts 3-alpha-tetrahydroprogesterone (allopregnanolone) to dihydroxyprogesterone and 3-alpha-androstanediol to dihydroxyprogesterone. Plays also role in the biosynthesis of retinoic acid from retinaldehyde. Can utilize both NADH and NADPH. This is Dehydrogenase/reductase SDR family member 9 (Dhrs9) from Rattus norvegicus (Rat).